The sequence spans 447 residues: Tubulin beta-2 chain (447 aa).

GTP is bound by residues Q11, E69, S138, G142, T143, G144, N204, and N226. E69 lines the Mg(2+) pocket. The tract at residues 426–447 is disordered; it reads QDAGVDEEEEEYEEEAPLEEEV. Residues 429–447 are compositionally biased toward acidic residues; it reads GVDEEEEEYEEEAPLEEEV.

It belongs to the tubulin family. Dimer of alpha and beta chains. A typical microtubule is a hollow water-filled tube with an outer diameter of 25 nm and an inner diameter of 15 nM. Alpha-beta heterodimers associate head-to-tail to form protofilaments running lengthwise along the microtubule wall with the beta-tubulin subunit facing the microtubule plus end conferring a structural polarity. Microtubules usually have 13 protofilaments but different protofilament numbers can be found in some organisms and specialized cells. Requires Mg(2+) as cofactor.

Its subcellular location is the cytoplasm. The protein resides in the cytoskeleton. Tubulin is the major constituent of microtubules, a cylinder consisting of laterally associated linear protofilaments composed of alpha- and beta-tubulin heterodimers. Microtubules grow by the addition of GTP-tubulin dimers to the microtubule end, where a stabilizing cap forms. Below the cap, tubulin dimers are in GDP-bound state, owing to GTPase activity of alpha-tubulin. This Colletotrichum gloeosporioides (Anthracnose fungus) protein is Tubulin beta-2 chain (TUB2).